Reading from the N-terminus, the 39-residue chain is Large ribosomal subunit protein bL12 (39 aa).

It belongs to the bacterial ribosomal protein bL12 family. Homodimer. Part of the ribosomal stalk of the 50S ribosomal subunit. Forms a multimeric L10(L12)X complex, where L10 forms an elongated spine to which 2 to 4 L12 dimers bind in a sequential fashion. Binds GTP-bound translation factors.

Functionally, forms part of the ribosomal stalk which helps the ribosome interact with GTP-bound translation factors. Is thus essential for accurate translation. This chain is Large ribosomal subunit protein bL12 (rplL), found in Arthrobacter glacialis.